The chain runs to 465 residues: Kynureninase (465 aa).

Pyridoxal 5'-phosphate-binding positions include L116, T117, 144–147 (FPSD), D231, H234, and Y256. K257 bears the N6-(pyridoxal phosphate)lysine mark. Residues W291 and N319 each coordinate pyridoxal 5'-phosphate.

The protein belongs to the kynureninase family. As to quaternary structure, homodimer. It depends on pyridoxal 5'-phosphate as a cofactor.

The protein resides in the cytoplasm. It carries out the reaction L-kynurenine + H2O = anthranilate + L-alanine + H(+). The catalysed reaction is 3-hydroxy-L-kynurenine + H2O = 3-hydroxyanthranilate + L-alanine + H(+). Its pathway is amino-acid degradation; L-kynurenine degradation; L-alanine and anthranilate from L-kynurenine: step 1/1. It functions in the pathway cofactor biosynthesis; NAD(+) biosynthesis; quinolinate from L-kynurenine: step 2/3. Catalyzes the cleavage of L-kynurenine (L-Kyn) and L-3-hydroxykynurenine (L-3OHKyn) into anthranilic acid (AA) and 3-hydroxyanthranilic acid (3-OHAA), respectively. This chain is Kynureninase, found in Scheffersomyces stipitis (strain ATCC 58785 / CBS 6054 / NBRC 10063 / NRRL Y-11545) (Yeast).